Consider the following 220-residue polypeptide: NADH-quinone oxidoreductase subunit I (220 aa).

2 consecutive 4Fe-4S ferredoxin-type domains span residues Leu71 to His102 and Asp112 to Arg141. [4Fe-4S] cluster contacts are provided by Cys82, Cys85, Cys88, Cys92, Cys121, Cys124, Cys127, and Cys131. Residues Met187–Val220 are disordered. Residues Pro198 to Thr207 are compositionally biased toward basic and acidic residues.

It belongs to the complex I 23 kDa subunit family. NDH-1 is composed of 14 different subunits. Subunits NuoA, H, J, K, L, M, N constitute the membrane sector of the complex. It depends on [4Fe-4S] cluster as a cofactor.

It is found in the cell inner membrane. The catalysed reaction is a quinone + NADH + 5 H(+)(in) = a quinol + NAD(+) + 4 H(+)(out). NDH-1 shuttles electrons from NADH, via FMN and iron-sulfur (Fe-S) centers, to quinones in the respiratory chain. The immediate electron acceptor for the enzyme in this species is believed to be ubiquinone. Couples the redox reaction to proton translocation (for every two electrons transferred, four hydrogen ions are translocated across the cytoplasmic membrane), and thus conserves the redox energy in a proton gradient. In Helicobacter pylori (strain Shi470), this protein is NADH-quinone oxidoreductase subunit I.